Reading from the N-terminus, the 282-residue chain is Hydroxyethylthiazole kinase 2 (282 aa).

Methionine 44 is a substrate binding site. Residues arginine 120 and serine 179 each contribute to the ATP site. Glycine 206 provides a ligand contact to substrate.

This sequence belongs to the Thz kinase family. Requires Mg(2+) as cofactor.

The enzyme catalyses 5-(2-hydroxyethyl)-4-methylthiazole + ATP = 4-methyl-5-(2-phosphooxyethyl)-thiazole + ADP + H(+). The protein operates within cofactor biosynthesis; thiamine diphosphate biosynthesis; 4-methyl-5-(2-phosphoethyl)-thiazole from 5-(2-hydroxyethyl)-4-methylthiazole: step 1/1. Catalyzes the phosphorylation of the hydroxyl group of 4-methyl-5-beta-hydroxyethylthiazole (THZ). In Methanosphaera stadtmanae (strain ATCC 43021 / DSM 3091 / JCM 11832 / MCB-3), this protein is Hydroxyethylthiazole kinase 2.